The chain runs to 186 residues: ATP synthase subunit delta (186 aa).

Belongs to the ATPase delta chain family. As to quaternary structure, F-type ATPases have 2 components, F(1) - the catalytic core - and F(0) - the membrane proton channel. F(1) has five subunits: alpha(3), beta(3), gamma(1), delta(1), epsilon(1). F(0) has three main subunits: a(1), b(2) and c(10-14). The alpha and beta chains form an alternating ring which encloses part of the gamma chain. F(1) is attached to F(0) by a central stalk formed by the gamma and epsilon chains, while a peripheral stalk is formed by the delta and b chains.

It is found in the cell inner membrane. F(1)F(0) ATP synthase produces ATP from ADP in the presence of a proton or sodium gradient. F-type ATPases consist of two structural domains, F(1) containing the extramembraneous catalytic core and F(0) containing the membrane proton channel, linked together by a central stalk and a peripheral stalk. During catalysis, ATP synthesis in the catalytic domain of F(1) is coupled via a rotary mechanism of the central stalk subunits to proton translocation. Its function is as follows. This protein is part of the stalk that links CF(0) to CF(1). It either transmits conformational changes from CF(0) to CF(1) or is implicated in proton conduction. The sequence is that of ATP synthase subunit delta from Chelativorans sp. (strain BNC1).